A 426-amino-acid chain; its full sequence is uncharacterized protein (426 aa).

Residues 23–42 (ENPRPTNNPSTSHPSDSYST) form a disordered region. The span at 26-42 (RPTNNPSTSHPSDSYST) shows a compositional bias: polar residues.

The protein belongs to the serpin family.

This is an uncharacterized protein from Thermococcus kodakarensis (strain ATCC BAA-918 / JCM 12380 / KOD1) (Pyrococcus kodakaraensis (strain KOD1)).